The sequence spans 188 residues: Elongation factor P (188 aa).

Lys34 bears the N6-(3,6-diaminohexanoyl)-5-hydroxylysine mark.

The protein belongs to the elongation factor P family. May be beta-lysylated on the epsilon-amino group of Lys-34 by the combined action of EpmA and EpmB, and then hydroxylated on the C5 position of the same residue by EpmC (if this protein is present). Lysylation is critical for the stimulatory effect of EF-P on peptide-bond formation. The lysylation moiety may extend toward the peptidyltransferase center and stabilize the terminal 3-CCA end of the tRNA. Hydroxylation of the C5 position on Lys-34 may allow additional potential stabilizing hydrogen-bond interactions with the P-tRNA.

The protein localises to the cytoplasm. Its pathway is protein biosynthesis; polypeptide chain elongation. In terms of biological role, involved in peptide bond synthesis. Alleviates ribosome stalling that occurs when 3 or more consecutive Pro residues or the sequence PPG is present in a protein, possibly by augmenting the peptidyl transferase activity of the ribosome. Modification of Lys-34 is required for alleviation. The protein is Elongation factor P of Stenotrophomonas maltophilia (strain K279a).